The primary structure comprises 405 residues: Arginine biosynthesis bifunctional protein ArgJ (405 aa).

Substrate contacts are provided by Thr-152, Lys-178, Thr-189, Glu-276, Asn-400, and Thr-405. The Nucleophile role is filled by Thr-189.

It belongs to the ArgJ family. In terms of assembly, heterotetramer of two alpha and two beta chains.

The protein localises to the cytoplasm. The enzyme catalyses N(2)-acetyl-L-ornithine + L-glutamate = N-acetyl-L-glutamate + L-ornithine. The catalysed reaction is L-glutamate + acetyl-CoA = N-acetyl-L-glutamate + CoA + H(+). The protein operates within amino-acid biosynthesis; L-arginine biosynthesis; L-ornithine and N-acetyl-L-glutamate from L-glutamate and N(2)-acetyl-L-ornithine (cyclic): step 1/1. It participates in amino-acid biosynthesis; L-arginine biosynthesis; N(2)-acetyl-L-ornithine from L-glutamate: step 1/4. Its function is as follows. Catalyzes two activities which are involved in the cyclic version of arginine biosynthesis: the synthesis of N-acetylglutamate from glutamate and acetyl-CoA as the acetyl donor, and of ornithine by transacetylation between N(2)-acetylornithine and glutamate. This Pseudomonas savastanoi pv. phaseolicola (strain 1448A / Race 6) (Pseudomonas syringae pv. phaseolicola (strain 1448A / Race 6)) protein is Arginine biosynthesis bifunctional protein ArgJ.